The following is a 220-amino-acid chain: Glutathione S-transferase-like protein FUS3 (220 aa).

Residues 3–84 enclose the GST N-terminal domain; the sequence is SFGTLYTYMP…YVAQSGPQAS (82 aa). The 131-residue stretch at 90-220 folds into the GST C-terminal domain; that stretch reads DAMSSAKIRQ…LIEKRRIGAK (131 aa).

Belongs to the GST superfamily.

Its function is as follows. Glutathione S-transferase-like protein; part of the gene cluster that mediates the biosynthesis of the mycotoxin fusarin C. Within the cluster, FUS1, FUS2, FUS8 and FUS9 are sufficient for fusarin production. The other FUS cluster members are not essential for fusarin C biosynthesis. This Gibberella moniliformis (strain M3125 / FGSC 7600) (Maize ear and stalk rot fungus) protein is Glutathione S-transferase-like protein FUS3.